We begin with the raw amino-acid sequence, 141 residues long: Large ribosomal subunit protein uL11 (141 aa).

The protein belongs to the universal ribosomal protein uL11 family. As to quaternary structure, part of the ribosomal stalk of the 50S ribosomal subunit. Interacts with L10 and the large rRNA to form the base of the stalk. L10 forms an elongated spine to which L12 dimers bind in a sequential fashion forming a multimeric L10(L12)X complex. Post-translationally, one or more lysine residues are methylated.

Forms part of the ribosomal stalk which helps the ribosome interact with GTP-bound translation factors. This chain is Large ribosomal subunit protein uL11, found in Chlamydia pneumoniae (Chlamydophila pneumoniae).